Here is a 57-residue protein sequence, read N- to C-terminus: Large ribosomal subunit protein bL32 (57 aa).

The interval 1 to 38 (MAVQQNKPTRSKRGMRRSHDALTAVTSLSVDKTSGEKH) is disordered.

This sequence belongs to the bacterial ribosomal protein bL32 family.

This is Large ribosomal subunit protein bL32 from Escherichia coli O7:K1 (strain IAI39 / ExPEC).